The primary structure comprises 429 residues: Actin-like protein 6A (429 aa).

Serine 2 carries the post-translational modification N-acetylserine. Lysine 62 is covalently cross-linked (Glycyl lysine isopeptide (Lys-Gly) (interchain with G-Cter in SUMO2)). 2 positions are modified to phosphoserine: serine 86 and serine 233.

It belongs to the actin family. In terms of assembly, component of numerous complexes with chromatin remodeling and histone acetyltransferase activity. Component of the NuA4 histone acetyltransferase complex which contains the catalytic subunit KAT5/TIP60 and the subunits EP400, TRRAP/PAF400, BRD8/SMAP, EPC1, DMAP1/DNMAP1, RUVBL1/TIP49, RUVBL2, ING3, actin, ACTL6A/BAF53A, MORF4L1/MRG15, MORF4L2/MRGX, MRGBP, YEATS4/GAS41, VPS72/YL1 and MEAF6. The NuA4 complex interacts with MYC and the adenovirus E1A protein. Component of a NuA4-related complex which contains EP400, TRRAP/PAF400, SRCAP, BRD8/SMAP, EPC1, DMAP1/DNMAP1, RUVBL1/TIP49, RUVBL2, actin, ACTL6A/BAF53A, VPS72 and YEATS4/GAS41. Component of the multiprotein chromatin-remodeling complexes SWI/SNF: SWI/SNF-A (BAF), SWI/SNF-B (PBAF) and related complexes. The canonical complex contains a catalytic subunit (either SMARCA4/BRG1/BAF190A or SMARCA2/BRM/BAF190B) and at least SMARCE1, ACTL6A/BAF53, SMARCC1/BAF155, SMARCC2/BAF170, and SMARCB1/SNF5/BAF47. Other subunits specific to each of the complexes may also be present permitting several possible combinations developmentally and tissue specific. Component of the BAF complex, which includes at least actin (ACTB), ARID1A/BAF250A, ARID1B/BAF250B, SMARCA2/BRM, SMARCA4/BRG1/BAF190A, ACTL6A/BAF53, ACTL6B/BAF53B, SMARCE1/BAF57, SMARCC1/BAF155, SMARCC2/BAF170, SMARCB1/SNF5/INI1, and one or more SMARCD1/BAF60A, SMARCD2/BAF60B, or SMARCD3/BAF60C. In muscle cells, the BAF complex also contains DPF3. Component of the BAF53 complex, at least composed of ACTL6A/BAF53A, RUVBL1/TIP49, SMARCA2/BRM/BAF190B and TRRAP/PAF400, and which may also include a HAT activity related to, but distinct from, that of KAT5. Component of neural progenitors-specific chromatin remodeling complex (npBAF complex) composed of at least, ARID1A/BAF250A or ARID1B/BAF250B, SMARCD1/BAF60A, SMARCD3/BAF60C, SMARCA2/BRM/BAF190B, SMARCA4/BRG1/BAF190A, SMARCB1/BAF47, SMARCC1/BAF155, SMARCE1/BAF57, SMARCC2/BAF170, PHF10/BAF45A, ACTL6A/BAF53A and actin. Component of SWI/SNF (GBAF) subcomplex, which includes at least BICRA or BICRAL (mutually exclusive), BRD9, SS18, SMARCA2/BRM, SMARCA4/BRG1/BAF190A, ACTL6A/BAF53, SMARCC1/BAF155, and SMARCD1/BAF60A. May be a component of the SWI/SNF-B (PBAF) chromatin remodeling complex, at least composed of SMARCA4/BRG1, SMARCB1/BAF47/SNF5, ACTL6A/BAF53A or ACTL6B/BAF53B, SMARCE1/BAF57, SMARCD1/BAF60A, SMARCD2/BAF60B, perhaps SMARCD3/BAF60C, SMARCC1/BAF155, SMARCC2/BAF170, PBRM1/BAF180, ARID2/BAF200 and actin. Interacts with SMARCA4/BRG1/BAF190A. Interacts with PHF10/BAF45A. Component of the chromatin remodeling INO80 complex; specifically part of a complex module associated with the DBINO domain of INO80. Interacts with DPF2. Widely expressed. Expressed selectively in neural stem and progenitor cells (at protein level).

It is found in the nucleus. Functionally, involved in transcriptional activation and repression of select genes by chromatin remodeling (alteration of DNA-nucleosome topology). Component of SWI/SNF chromatin remodeling complexes that carry out key enzymatic activities, changing chromatin structure by altering DNA-histone contacts within a nucleosome in an ATP-dependent manner. Required for maximal ATPase activity of SMARCA4/BRG1/BAF190A and for association of the SMARCA4/BRG1/BAF190A containing remodeling complex BAF with chromatin/nuclear matrix. Belongs to the neural progenitors-specific chromatin remodeling complex (npBAF complex) and is required for the proliferation of neural progenitors. During neural development a switch from a stem/progenitor to a postmitotic chromatin remodeling mechanism occurs as neurons exit the cell cycle and become committed to their adult state. The transition from proliferating neural stem/progenitor cells to postmitotic neurons requires a switch in subunit composition of the npBAF and nBAF complexes. As neural progenitors exit mitosis and differentiate into neurons, npBAF complexes which contain ACTL6A/BAF53A and PHF10/BAF45A, are exchanged for homologous alternative ACTL6B/BAF53B and DPF1/BAF45B or DPF3/BAF45C subunits in neuron-specific complexes (nBAF). The npBAF complex is essential for the self-renewal/proliferative capacity of the multipotent neural stem cells. The nBAF complex along with CREST plays a role regulating the activity of genes essential for dendrite growth. Component of the NuA4 histone acetyltransferase (HAT) complex which is involved in transcriptional activation of select genes principally by acetylation of nucleosomal histones H4 and H2A. This modification may both alter nucleosome - DNA interactions and promote interaction of the modified histones with other proteins which positively regulate transcription. This complex may be required for the activation of transcriptional programs associated with oncogene and proto-oncogene mediated growth induction, tumor suppressor mediated growth arrest and replicative senescence, apoptosis, and DNA repair. NuA4 may also play a direct role in DNA repair when recruited to sites of DNA damage. Putative core component of the chromatin remodeling INO80 complex which is involved in transcriptional regulation, DNA replication and probably DNA repair. The polypeptide is Actin-like protein 6A (Actl6a) (Mus musculus (Mouse)).